A 332-amino-acid chain; its full sequence is GTP 3',8-cyclase (332 aa).

Residues 9–220 (RFARKVDYLR…DQVRERIAER (212 aa)) form the Radical SAM core domain. Residue R18 participates in GTP binding. [4Fe-4S] cluster-binding residues include C25 and C29. Y31 contacts S-adenosyl-L-methionine. [4Fe-4S] cluster is bound at residue C32. R67 contributes to the GTP binding site. Residue G71 participates in S-adenosyl-L-methionine binding. Residue T98 coordinates GTP. S122 is a binding site for S-adenosyl-L-methionine. K159 contributes to the GTP binding site. M193 serves as a coordination point for S-adenosyl-L-methionine. C258 and C261 together coordinate [4Fe-4S] cluster. 263 to 265 (RVR) lines the GTP pocket. Residue C275 coordinates [4Fe-4S] cluster.

This sequence belongs to the radical SAM superfamily. MoaA family. Monomer and homodimer. It depends on [4Fe-4S] cluster as a cofactor.

It carries out the reaction GTP + AH2 + S-adenosyl-L-methionine = (8S)-3',8-cyclo-7,8-dihydroguanosine 5'-triphosphate + 5'-deoxyadenosine + L-methionine + A + H(+). The protein operates within cofactor biosynthesis; molybdopterin biosynthesis. In terms of biological role, catalyzes the cyclization of GTP to (8S)-3',8-cyclo-7,8-dihydroguanosine 5'-triphosphate. The sequence is that of GTP 3',8-cyclase from Pseudomonas savastanoi pv. phaseolicola (strain 1448A / Race 6) (Pseudomonas syringae pv. phaseolicola (strain 1448A / Race 6)).